The chain runs to 312 residues: Malate dehydrogenase (312 aa).

NAD(+)-binding positions include 12 to 17 and aspartate 36; that span reads GAGFTG. Substrate-binding residues include arginine 87 and arginine 93. NAD(+) is bound by residues asparagine 100 and 123–125; that span reads LTN. Position 125 (asparagine 125) interacts with substrate. Serine 149 bears the Phosphoserine mark. Arginine 156 provides a ligand contact to substrate. Histidine 180 serves as the catalytic Proton acceptor.

The protein belongs to the LDH/MDH superfamily. MDH type 3 family.

The enzyme catalyses (S)-malate + NAD(+) = oxaloacetate + NADH + H(+). Its function is as follows. Catalyzes the reversible oxidation of malate to oxaloacetate. In Anoxybacillus flavithermus (strain DSM 21510 / WK1), this protein is Malate dehydrogenase.